Consider the following 210-residue polypeptide: Cilia- and flagella-associated protein 418 (210 aa).

Positions 1 to 77 (MAKDLDELLD…LINEIFEEPN (77 aa)) are required for interaction with FAM161A. The disordered stretch occupies residues 24 to 59 (LDLGERPKGGSGGGGTHSGDRNGAQEKDTLRSTETF). Residues 41–59 (SGDRNGAQEKDTLRSTETF) show a composition bias toward basic and acidic residues.

Interacts (via N-terminus) with FAM161A (via central region); the interaction is direct.

It localises to the cytoplasm. Its subcellular location is the photoreceptor inner segment. In terms of biological role, may be involved in photoreceptor outer segment disk morphogenesis. The chain is Cilia- and flagella-associated protein 418 from Rattus norvegicus (Rat).